A 283-amino-acid chain; its full sequence is Pantothenate synthetase 2 (283 aa).

34 to 41 (MGALHDGH) serves as a coordination point for ATP. Catalysis depends on histidine 41, which acts as the Proton donor. Glutamine 65 contributes to the (R)-pantoate binding site. Residue glutamine 65 coordinates beta-alanine. 152–155 (GEKD) is a binding site for ATP. Glutamine 158 provides a ligand contact to (R)-pantoate. ATP contacts are provided by residues valine 181 and 189–192 (MSSR).

This sequence belongs to the pantothenate synthetase family. In terms of assembly, homodimer.

It is found in the cytoplasm. The catalysed reaction is (R)-pantoate + beta-alanine + ATP = (R)-pantothenate + AMP + diphosphate + H(+). It participates in cofactor biosynthesis; (R)-pantothenate biosynthesis; (R)-pantothenate from (R)-pantoate and beta-alanine: step 1/1. Its function is as follows. Catalyzes the condensation of pantoate with beta-alanine in an ATP-dependent reaction via a pantoyl-adenylate intermediate. The sequence is that of Pantothenate synthetase 2 from Bradyrhizobium diazoefficiens (strain JCM 10833 / BCRC 13528 / IAM 13628 / NBRC 14792 / USDA 110).